The chain runs to 436 residues: MKFSVKNILEMEVCLALGCTEPVAIALGAAAAATLLPGLKFDHIHLIIDPNIYKNGLAVVIPGSGGLTGLDTASALGAFGGDAYGKLEVLSSLSPEMVARASAFLAEGRVKVDLREESGLYVKTTISGGGHVAESLITDVHTNIVSLMLDGEEVADPRLVATEAMSTGNKLAELEEWLRSLTLEDILDLTNELDEADLDFLEEGVQHNLRLAEYGLKHGSGLGIGKDIDRLLKQKLLVKDMTTSARMLTSAAADARMDGVNLPAMSSGGSGNHGLTAILPIWAIKDFIETDRESVLRAIGLSHIITAYIKAHTGRLSAVCGCSVAAGAGATAGITYLVGGDLQQVEGAIKNILEDLAGVICDGAKAGCAIKLNTAAGAAVQAALFSLQGVSVKDTDGIIGDSTRQTVQNIGDLSNYGMVATDKTILKIMRAKHKKG.

The protein belongs to the UPF0597 family.

The chain is UPF0597 protein DP0591 from Desulfotalea psychrophila (strain LSv54 / DSM 12343).